Reading from the N-terminus, the 159-residue chain is Ribosomal RNA large subunit methyltransferase H (159 aa).

S-adenosyl-L-methionine-binding positions include L76, G108, and 127–132; that span reads FSKMTF.

It belongs to the RNA methyltransferase RlmH family. Homodimer.

The protein localises to the cytoplasm. The catalysed reaction is pseudouridine(1915) in 23S rRNA + S-adenosyl-L-methionine = N(3)-methylpseudouridine(1915) in 23S rRNA + S-adenosyl-L-homocysteine + H(+). In terms of biological role, specifically methylates the pseudouridine at position 1915 (m3Psi1915) in 23S rRNA. The protein is Ribosomal RNA large subunit methyltransferase H of Clostridium botulinum (strain ATCC 19397 / Type A).